Consider the following 475-residue polypeptide: Chromosomal replication initiator protein DnaA (475 aa).

Residues 1 to 71 (MTNDTWNEVR…RQLSAHGAGA (71 aa)) form a domain I, interacts with DnaA modulators region. The domain II stretch occupies residues 71–133 (ADRVKFTVSP…PAQPRELPGA (63 aa)). A compositionally biased stretch (low complexity) spans 107–127 (APAPVHHTAPAPAPVAAPAQP). The interval 107–129 (APAPVHHTAPAPAPVAAPAQPRE) is disordered. A domain III, AAA+ region region spans residues 134 to 355 (KLNPNFTFAN…GALTRLFAFA (222 aa)). ATP-binding residues include glycine 178, glycine 180, lysine 181, and threonine 182. Positions 356–475 (DLVRREVTVD…AELLRRTLEA (120 aa)) are domain IV, binds dsDNA.

This sequence belongs to the DnaA family. As to quaternary structure, oligomerizes as a right-handed, spiral filament on DNA at oriC.

Its subcellular location is the cytoplasm. Functionally, plays an essential role in the initiation and regulation of chromosomal replication. ATP-DnaA binds to the origin of replication (oriC) to initiate formation of the DNA replication initiation complex once per cell cycle. Binds the DnaA box (a 9 base pair repeat at the origin) and separates the double-stranded (ds)DNA. Forms a right-handed helical filament on oriC DNA; dsDNA binds to the exterior of the filament while single-stranded (ss)DNA is stabiized in the filament's interior. The ATP-DnaA-oriC complex binds and stabilizes one strand of the AT-rich DNA unwinding element (DUE), permitting loading of DNA polymerase. After initiation quickly degrades to an ADP-DnaA complex that is not apt for DNA replication. Binds acidic phospholipids. The sequence is that of Chromosomal replication initiator protein DnaA from Jannaschia sp. (strain CCS1).